The following is a 294-amino-acid chain: MSCNNGMSFFPSNFMIQTSYEDDHPHQSPSLAPLLPSCSLPQDLHGFASFLGKRSPMEGCCDLETGNNMNGEEDYSDDGSQMGEKKRRLNMEQVKTLEKNFELGNKLEPERKMQLARALGLQPRQIAIWFQNRRARWKTKQLEKDYDTLKRQFDTLKAENDLLQTHNQKLQAEIMGLKNREQTESINLNKETEGSCSNRSDNSSDNLRLDISTAPPSNDSTLTGGHPPPPQTVGRHFFPPSPATATTTTTTMQFFQNSSSGQSMVKEENSISNMFCAMDDHSGFWPWLDQQQYN.

Positions 82–141 form a DNA-binding region, homeobox; sequence MGEKKRRLNMEQVKTLEKNFELGNKLEPERKMQLARALGLQPRQIAIWFQNRRARWKTKQ. Residues 142–177 form a leucine-zipper region; it reads LEKDYDTLKRQFDTLKAENDLLQTHNQKLQAEIMGL. The interval 181–246 is disordered; the sequence is EQTESINLNK…FFPPSPATAT (66 aa). Low complexity predominate over residues 197-210; that stretch reads SNRSDNSSDNLRLD. A compositionally biased stretch (polar residues) spans 214–223; that stretch reads APPSNDSTLT.

Belongs to the HD-ZIP homeobox family. Class I subfamily. In terms of tissue distribution, predominantly expressed in leaves and flowers.

Its subcellular location is the nucleus. Functionally, probable transcription factor that may act in the sucrose-signaling pathway. In Arabidopsis thaliana (Mouse-ear cress), this protein is Homeobox-leucine zipper protein ATHB-13 (ATHB-13).